A 238-amino-acid chain; its full sequence is MSQMTYKRVLLKLSGESLAGRQLTGIDPDTVAVLCNELSSVIELGLQIALVIGGGNIFRGLSASAKGMDRSSADYMGMLATVLNALAIQDTLEKKGHPTRVLSAIAMQEVCEPYVRRRAMRHLEKGRVIICAAGTGNPYFTTDTAAALRCMELKCDALIKATRVDGVYDKDPLKFDDAEMFKHLTYEETLRRHIKIMDSTAITLAQENNIPIIVCNMFNGSIKRAILGQNPGTTVEGE.

12–15 (KLSG) is an ATP binding site. Glycine 54 lines the UMP pocket. ATP contacts are provided by glycine 55 and arginine 59. Residues aspartate 74 and 135-142 (TGNPYFTT) each bind UMP. 3 residues coordinate ATP: threonine 162, tyrosine 168, and aspartate 171.

Belongs to the UMP kinase family. Homohexamer.

It is found in the cytoplasm. The enzyme catalyses UMP + ATP = UDP + ADP. It participates in pyrimidine metabolism; CTP biosynthesis via de novo pathway; UDP from UMP (UMPK route): step 1/1. With respect to regulation, inhibited by UTP. Functionally, catalyzes the reversible phosphorylation of UMP to UDP. The sequence is that of Uridylate kinase from Lawsonia intracellularis (strain PHE/MN1-00).